The primary structure comprises 137 residues: MSRSYPGEQVEHAFNSKRLKNWEVPAVDKSQAISTSTGTRFGTLQPRSGRTQFIVDDNGHLKSGVPKLEKSAFNFTQTTPVFMDSAPRWPKENPTWPKNMKATMGYKGIQSNYLPTNTVTLKAVEVPGTTERNFNFM.

This sequence belongs to the Flattop family.

The protein resides in the cytoplasm. It is found in the cytoskeleton. Its subcellular location is the flagellum axoneme. Functionally, microtubule inner protein (MIP) part of the dynein-decorated doublet microtubules (DMTs) in cilia axoneme. Acts as a regulator of cilium basal body docking and positioning in mono- and multiciliated cells. Regulates basal body docking and cilia formation in multiciliated lung cells. Regulates kinocilium positioning and stereocilia bundle morphogenesis in the inner ear. This is Protein Flattop homolog from Chlamydomonas reinhardtii (Chlamydomonas smithii).